Consider the following 134-residue polypeptide: Fluoride-specific ion channel FluC (134 aa).

Helical transmembrane passes span 7–27 (LAVA…TIMA), 38–58 (GTLL…IVLV), 69–89 (LFLF…AAES), and 110–130 (VGSL…LLGH). Na(+) is bound by residues glycine 77 and threonine 80.

It belongs to the fluoride channel Fluc/FEX (TC 1.A.43) family.

It is found in the cell inner membrane. The enzyme catalyses fluoride(in) = fluoride(out). With respect to regulation, na(+) is not transported, but it plays an essential structural role and its presence is essential for fluoride channel function. Its function is as follows. Fluoride-specific ion channel. Important for reducing fluoride concentration in the cell, thus reducing its toxicity. In Legionella pneumophila (strain Paris), this protein is Fluoride-specific ion channel FluC.